The sequence spans 110 residues: U32-theraphotoxin-Cg1a (110 aa).

The N-terminal stretch at 1-19 (MKHCFLILFTLIVFTVVWS) is a signal peptide. Positions 20–43 (LEENEEYPDEDEMIESFMDGYSYR) are excised as a propeptide. 4 cysteine pairs are disulfide-bonded: Cys49/Cys63, Cys56/Cys69, Cys60/Cys105, and Cys62/Cys80.

This sequence belongs to the neurotoxin 03 (Tx2) family. 02 subfamily. Expressed by the venom gland.

The protein localises to the secreted. Its function is as follows. Probable ion channel inhibitor. This Chilobrachys guangxiensis (Chinese earth tiger tarantula) protein is U32-theraphotoxin-Cg1a.